Here is a 204-residue protein sequence, read N- to C-terminus: FMN-dependent NADH:quinone oxidoreductase (204 aa).

Ser-9 contributes to the FMN binding site.

Belongs to the azoreductase type 1 family. As to quaternary structure, homodimer. It depends on FMN as a cofactor.

It catalyses the reaction 2 a quinone + NADH + H(+) = 2 a 1,4-benzosemiquinone + NAD(+). The catalysed reaction is N,N-dimethyl-1,4-phenylenediamine + anthranilate + 2 NAD(+) = 2-(4-dimethylaminophenyl)diazenylbenzoate + 2 NADH + 2 H(+). Functionally, quinone reductase that provides resistance to thiol-specific stress caused by electrophilic quinones. Also exhibits azoreductase activity. Catalyzes the reductive cleavage of the azo bond in aromatic azo compounds to the corresponding amines. The chain is FMN-dependent NADH:quinone oxidoreductase from Thiobacillus denitrificans (strain ATCC 25259 / T1).